The primary structure comprises 328 residues: DNA-directed RNA polymerase subunit alpha (328 aa).

An alpha N-terminal domain (alpha-NTD) region spans residues 1 to 231 (MIYQMQMPAK…EHVAFFADFS (231 aa)). Positions 252-328 (MRKLLNTKIE…MDITKYQMKG (77 aa)) are alpha C-terminal domain (alpha-CTD).

It belongs to the RNA polymerase alpha chain family. Homodimer. The RNAP catalytic core consists of 2 alpha, 1 beta, 1 beta' and 1 omega subunit. When a sigma factor is associated with the core the holoenzyme is formed, which can initiate transcription.

The enzyme catalyses RNA(n) + a ribonucleoside 5'-triphosphate = RNA(n+1) + diphosphate. In terms of biological role, DNA-dependent RNA polymerase catalyzes the transcription of DNA into RNA using the four ribonucleoside triphosphates as substrates. The sequence is that of DNA-directed RNA polymerase subunit alpha from Chlorobium phaeovibrioides (strain DSM 265 / 1930) (Prosthecochloris vibrioformis (strain DSM 265)).